Reading from the N-terminus, the 66-residue chain is uncharacterized protein (66 aa).

Residues 1–18 show a composition bias toward low complexity; sequence MSTTSSSSTFSTRTASLS. A disordered region spans residues 1–22; sequence MSTTSSSSTFSTRTASLSQSYT.

This is an uncharacterized protein from Schizosaccharomyces pombe (strain 972 / ATCC 24843) (Fission yeast).